Here is a 268-residue protein sequence, read N- to C-terminus: Holocytochrome c-type synthase (268 aa).

The segment covering 1–22 (MGLSPSAPAVAVQASNASASPP) has biased composition (low complexity). Residues 1 to 25 (MGLSPSAPAVAVQASNASASPPSGC) form a disordered region. The N-myristoyl glycine moiety is linked to residue Gly-2. HRM repeat units lie at residues 24 to 29 (GCPMHE) and 34 to 39 (GCPVNT).

The protein belongs to the cytochrome c-type heme lyase family.

It localises to the mitochondrion inner membrane. It is found in the membrane. It catalyses the reaction holo-[cytochrome c] = apo-[cytochrome c] + heme b. Lyase that catalyzes the covalent linking of the heme group to the cytochrome C apoprotein to produce the mature functional cytochrome. The chain is Holocytochrome c-type synthase from Homo sapiens (Human).